Consider the following 360-residue polypeptide: Probable ribonucleoside-diphosphate reductase small subunit 376L (360 aa).

Fe cation-binding residues include D67, E98, and H101. The active site involves Y105. E172, E206, and H209 together coordinate Fe cation.

It belongs to the ribonucleoside diphosphate reductase small chain family. As to quaternary structure, heterotetramer composed of a homodimer of the large subunit (R1) and a homodimer of the small subunit (R2). Larger multisubunit protein complex are also active, composed of (R1)n(R2)n. Requires Fe cation as cofactor.

The catalysed reaction is a 2'-deoxyribonucleoside 5'-diphosphate + [thioredoxin]-disulfide + H2O = a ribonucleoside 5'-diphosphate + [thioredoxin]-dithiol. Its function is as follows. Ribonucleoside-diphosphate reductase holoenzyme provides the precursors necessary for viral DNA synthesis. Allows virus growth in non-dividing cells. Catalyzes the biosynthesis of deoxyribonucleotides from the corresponding ribonucleotides. The chain is Probable ribonucleoside-diphosphate reductase small subunit 376L from Acheta domesticus (House cricket).